Reading from the N-terminus, the 79-residue chain is Small ribosomal subunit protein bS16c (79 aa).

It belongs to the bacterial ribosomal protein bS16 family.

The protein localises to the plastid. It localises to the chloroplast. The chain is Small ribosomal subunit protein bS16c from Trieres chinensis (Marine centric diatom).